The chain runs to 717 residues: Serologically defined colon cancer antigen 8 homolog (717 aa).

Serine 4 and serine 28 each carry phosphoserine. Residues 84–115 are disordered; the sequence is QTNKENETSPPRRRKLSPSRPSECDDGSMPTM. Coiled-coil stretches lie at residues 129-168, 221-278, 352-590, and 622-712; these read IHHL…KSQR, DANK…LAAS, EEAN…SEQY, and RSQI…LPSM. Residues 216–717 form a sufficient for homodimerization region; sequence TASTGDANKW…QLPSMPQSDC (502 aa).

As to quaternary structure, homodimer. Interacts with OFD1; the interaction is direct. Interacts with FAM161A. Interacts with RABEP2, ERC1 and CEP131. Expressed in liver, kidney, spleen, brain, heart and muscle. Expressed in photoreceptor cells of the retina.

It is found in the cytoplasm. The protein resides in the cytoskeleton. The protein localises to the microtubule organizing center. It localises to the centrosome. Its subcellular location is the centriole. It is found in the cilium basal body. The protein resides in the cell junction. In terms of biological role, plays a role in the establishment of cell polarity and epithelial lumen formation. Also plays an essential role in ciliogenesis and subsequent Hedgehog signaling pathway that requires the presence of intact primary cilia for pathway activation. Mechanistically, interacts with and mediates RABEP2 centrosomal localization which is critical for ciliogenesis. The sequence is that of Serologically defined colon cancer antigen 8 homolog (Sdccag8) from Mus musculus (Mouse).